The sequence spans 817 residues: Protein hunchback (817 aa).

3 disordered regions span residues 51–77 (PGTI…HSPL), 93–132 (HNGG…TSSA), and 187–252 (YSQQ…EDQD). The span at 62 to 76 (QQHSSMMASQPQHSP) shows a compositional bias: low complexity. The segment covering 103-119 (FSDNSGAMTPSPNTNVG) has biased composition (polar residues). The segment covering 189–201 (QQQQQQQQRQLQQ) has biased composition (low complexity). 4 C2H2-type zinc fingers span residues 287 to 309 (HKCK…ARTH), 316 to 338 (LQCP…IRKH), 344 to 366 (FQCD…RKSH), and 372 to 396 (YRCA…KYEH). Disordered regions lie at residues 456–477 (PLQQ…SSVA), 491–513 (QNLA…SSQQ), 564–619 (QLQQ…QQTP), and 666–758 (APTS…AGNS). Low complexity predominate over residues 564–576 (QLQQQQQNKQANE). Over residues 577-595 (NGEEDEEDNDEVDEDEEEF) the composition is skewed to acidic residues. A compositionally biased stretch (polar residues) spans 680–694 (MPPTTSSPIHPSQVN). A compositionally biased stretch (low complexity) spans 721–758 (PTTANTSASSTASSSGNSSNSSSTSTSSNSNSSSAGNS). 2 C2H2-type zinc fingers span residues 764 to 786 (YECK…MGYH) and 792 to 816 (FKCN…RNAH).

It belongs to the hunchback C2H2-type zinc-finger protein family.

It localises to the nucleus. Functionally, gap class segmentation protein that controls development of head structures. This chain is Protein hunchback (hb), found in Musca domestica (House fly).